Consider the following 399-residue polypeptide: 1-deoxy-D-xylulose 5-phosphate reductoisomerase (399 aa).

Positions 10, 11, 12, 13, and 124 each coordinate NADPH. Lys125 contributes to the 1-deoxy-D-xylulose 5-phosphate binding site. Glu126 provides a ligand contact to NADPH. Asp150 is a Mn(2+) binding site. Positions 151, 152, 186, and 209 each coordinate 1-deoxy-D-xylulose 5-phosphate. Residue Glu152 coordinates Mn(2+). Gly215 provides a ligand contact to NADPH. 1-deoxy-D-xylulose 5-phosphate contacts are provided by Ser222, Asn227, Lys228, and Glu231. Glu231 is a binding site for Mn(2+).

The protein belongs to the DXR family. Mg(2+) serves as cofactor. The cofactor is Mn(2+).

The catalysed reaction is 2-C-methyl-D-erythritol 4-phosphate + NADP(+) = 1-deoxy-D-xylulose 5-phosphate + NADPH + H(+). It functions in the pathway isoprenoid biosynthesis; isopentenyl diphosphate biosynthesis via DXP pathway; isopentenyl diphosphate from 1-deoxy-D-xylulose 5-phosphate: step 1/6. Catalyzes the NADPH-dependent rearrangement and reduction of 1-deoxy-D-xylulose-5-phosphate (DXP) to 2-C-methyl-D-erythritol 4-phosphate (MEP). In Psychromonas ingrahamii (strain DSM 17664 / CCUG 51855 / 37), this protein is 1-deoxy-D-xylulose 5-phosphate reductoisomerase.